Reading from the N-terminus, the 233-residue chain is Small ribosomal subunit protein uS2 (233 aa).

It belongs to the universal ribosomal protein uS2 family.

The polypeptide is Small ribosomal subunit protein uS2 (Bacillus cytotoxicus (strain DSM 22905 / CIP 110041 / 391-98 / NVH 391-98)).